The chain runs to 130 residues: Small ribosomal subunit protein uS9 (130 aa).

The protein belongs to the universal ribosomal protein uS9 family.

The protein is Small ribosomal subunit protein uS9 of Shewanella baltica (strain OS155 / ATCC BAA-1091).